The sequence spans 101 residues: Urease subunit beta (101 aa).

Belongs to the urease beta subunit family. As to quaternary structure, heterotrimer of UreA (gamma), UreB (beta) and UreC (alpha) subunits. Three heterotrimers associate to form the active enzyme.

The protein localises to the cytoplasm. It carries out the reaction urea + 2 H2O + H(+) = hydrogencarbonate + 2 NH4(+). Its pathway is nitrogen metabolism; urea degradation; CO(2) and NH(3) from urea (urease route): step 1/1. This is Urease subunit beta from Jannaschia sp. (strain CCS1).